Reading from the N-terminus, the 296-residue chain is MTTTLSRPTDGEGSVQVQQDPSMKIEEGALVIAVYGKGGIGKSTTSSNLSAAFSKLGKRVLQIGCDPKHDSTFTLTHSMVPTVIDILEEVDFHSEELRPDDFVFTGYNGVKCVESGGPPAGTGCGGYVTGQTVKLLKEHHLLEDTDVVIFDVLGDVVCGGFAAPLQHANYCLIVTANDFDSIFAMNRIVQAIQAKAKNYKVRLGGVIANRSADTDQIDKFNERTGLRTMAHFKDVDAIRRSRLKKCTIFEMDDDDDAVKAVKNEYLRLAQNMLDNVEPLEAVSLKDREIFDLLGFD.

Residues 1-20 form a disordered region; that stretch reads MTTTLSRPTDGEGSVQVQQD. Residues 39-44 and Lys68 each bind ATP; that span reads GIGKST. Residue Ser43 coordinates Mg(2+). [4Fe-4S] cluster-binding residues include Cys124 and Cys158. Position 209–210 (209–210) interacts with ATP; it reads NR.

This sequence belongs to the NifH/BchL/ChlL family. In terms of assembly, homodimer. Protochlorophyllide reductase is composed of three subunits; ChlL, ChlN and ChlB. Requires [4Fe-4S] cluster as cofactor.

It catalyses the reaction chlorophyllide a + oxidized 2[4Fe-4S]-[ferredoxin] + 2 ADP + 2 phosphate = protochlorophyllide a + reduced 2[4Fe-4S]-[ferredoxin] + 2 ATP + 2 H2O. Its pathway is porphyrin-containing compound metabolism; chlorophyll biosynthesis (light-independent). Its function is as follows. Component of the dark-operative protochlorophyllide reductase (DPOR) that uses Mg-ATP and reduced ferredoxin to reduce ring D of protochlorophyllide (Pchlide) to form chlorophyllide a (Chlide). This reaction is light-independent. The L component serves as a unique electron donor to the NB-component of the complex, and binds Mg-ATP. This is Light-independent protochlorophyllide reductase iron-sulfur ATP-binding protein from Synechococcus sp. (strain CC9902).